A 565-amino-acid chain; its full sequence is NAD-dependent malic enzyme (565 aa).

Tyrosine 104 acts as the Proton donor in catalysis. Position 157 (arginine 157) interacts with NAD(+). Residue lysine 175 is the Proton acceptor of the active site. Residues glutamate 246, aspartate 247, and aspartate 270 each coordinate a divalent metal cation. Residues aspartate 270 and asparagine 418 each coordinate NAD(+).

It belongs to the malic enzymes family. As to quaternary structure, homotetramer. The cofactor is Mg(2+). It depends on Mn(2+) as a cofactor.

The catalysed reaction is (S)-malate + NAD(+) = pyruvate + CO2 + NADH. It carries out the reaction oxaloacetate + H(+) = pyruvate + CO2. The protein is NAD-dependent malic enzyme of Shigella flexneri serotype 5b (strain 8401).